A 286-amino-acid polypeptide reads, in one-letter code: Divergent deoxyribose-phosphate aldolase-like protein (286 aa).

Homodimer. Interacts with ADF; the interaction enhances ADF activity in disassembly of filamentous actin and inhibition of actin polymerization.

Its subcellular location is the cytoplasm. Involved in regulation of actin dynamics. The chain is Divergent deoxyribose-phosphate aldolase-like protein from Toxoplasma gondii.